We begin with the raw amino-acid sequence, 234 residues long: uncharacterized protein (234 aa).

Low complexity predominate over residues 1-12 (MGSSSSSSLNNS). A disordered region spans residues 1–184 (MGSSSSSSLN…TPYLSGANSR (184 aa)). Composition is skewed to polar residues over residues 21 to 40 (TPES…SILS) and 52 to 64 (KSTS…NLTP). The segment covering 66-77 (KSRWSFSSSKKS) has biased composition (low complexity). Polar residues predominate over residues 105-120 (GDFTPSLGNTPKSSFS). The span at 152–167 (LGELFRDSIREEREES) shows a compositional bias: basic and acidic residues.

As to quaternary structure, interacts with RLK902. In terms of tissue distribution, expressed in stems, rosette leaves and roots and weakly in inflorescences.

This is an uncharacterized protein from Arabidopsis thaliana (Mouse-ear cress).